We begin with the raw amino-acid sequence, 162 residues long: 2-C-methyl-D-erythritol 2,4-cyclodiphosphate synthase (162 aa).

Residues D10 and H12 each contribute to the a divalent metal cation site. 4-CDP-2-C-methyl-D-erythritol 2-phosphate is bound by residues 10-12 and 36-37; these read DVH and HS. An a divalent metal cation-binding site is contributed by H44. Residues 58–60, 63–67, 102–108, 134–137, F141, and R144 contribute to the 4-CDP-2-C-methyl-D-erythritol 2-phosphate site; these read DIG, FPDTD, AQAPRMA, and TTSE.

Belongs to the IspF family. In terms of assembly, homotrimer. The cofactor is a divalent metal cation.

The enzyme catalyses 4-CDP-2-C-methyl-D-erythritol 2-phosphate = 2-C-methyl-D-erythritol 2,4-cyclic diphosphate + CMP. The protein operates within isoprenoid biosynthesis; isopentenyl diphosphate biosynthesis via DXP pathway; isopentenyl diphosphate from 1-deoxy-D-xylulose 5-phosphate: step 4/6. Involved in the biosynthesis of isopentenyl diphosphate (IPP) and dimethylallyl diphosphate (DMAPP), two major building blocks of isoprenoid compounds. Catalyzes the conversion of 4-diphosphocytidyl-2-C-methyl-D-erythritol 2-phosphate (CDP-ME2P) to 2-C-methyl-D-erythritol 2,4-cyclodiphosphate (ME-CPP) with a corresponding release of cytidine 5-monophosphate (CMP). In Chromohalobacter salexigens (strain ATCC BAA-138 / DSM 3043 / CIP 106854 / NCIMB 13768 / 1H11), this protein is 2-C-methyl-D-erythritol 2,4-cyclodiphosphate synthase.